A 273-amino-acid polypeptide reads, in one-letter code: Dermonecrotic toxin SdSicTox-betaIIB1bxiv (273 aa).

The active site involves histidine 4. Residues glutamate 24 and aspartate 26 each contribute to the Mg(2+) site. Residue histidine 40 is the Nucleophile of the active site. 2 disulfide bridges follow: cysteine 44–cysteine 50 and cysteine 46–cysteine 189. Position 84 (aspartate 84) interacts with Mg(2+).

The protein belongs to the arthropod phospholipase D family. Class II subfamily. It depends on Mg(2+) as a cofactor. As to expression, expressed by the venom gland.

It localises to the secreted. The enzyme catalyses an N-(acyl)-sphingosylphosphocholine = an N-(acyl)-sphingosyl-1,3-cyclic phosphate + choline. It carries out the reaction an N-(acyl)-sphingosylphosphoethanolamine = an N-(acyl)-sphingosyl-1,3-cyclic phosphate + ethanolamine. It catalyses the reaction a 1-acyl-sn-glycero-3-phosphocholine = a 1-acyl-sn-glycero-2,3-cyclic phosphate + choline. The catalysed reaction is a 1-acyl-sn-glycero-3-phosphoethanolamine = a 1-acyl-sn-glycero-2,3-cyclic phosphate + ethanolamine. Functionally, dermonecrotic toxins cleave the phosphodiester linkage between the phosphate and headgroup of certain phospholipids (sphingolipid and lysolipid substrates), forming an alcohol (often choline) and a cyclic phosphate. This toxin acts on sphingomyelin (SM). It may also act on ceramide phosphoethanolamine (CPE), lysophosphatidylcholine (LPC) and lysophosphatidylethanolamine (LPE), but not on lysophosphatidylserine (LPS), and lysophosphatidylglycerol (LPG). It acts by transphosphatidylation, releasing exclusively cyclic phosphate products as second products. Induces dermonecrosis, hemolysis, increased vascular permeability, edema, inflammatory response, and platelet aggregation. The protein is Dermonecrotic toxin SdSicTox-betaIIB1bxiv of Sicarius cf. damarensis (strain GJB-2008) (Six-eyed sand spider).